The primary structure comprises 704 residues: Elongation factor G (704 aa).

The region spanning 8–290 (ARYRNIGISA…AVIDYLPSPV (283 aa)) is the tr-type G domain. GTP contacts are provided by residues 17–24 (AHIDAGKT), 88–92 (DTPGH), and 142–145 (NKMD). N6-acetyllysine is present on residues Lys-504 and Lys-643.

Belongs to the TRAFAC class translation factor GTPase superfamily. Classic translation factor GTPase family. EF-G/EF-2 subfamily.

It localises to the cytoplasm. Catalyzes the GTP-dependent ribosomal translocation step during translation elongation. During this step, the ribosome changes from the pre-translocational (PRE) to the post-translocational (POST) state as the newly formed A-site-bound peptidyl-tRNA and P-site-bound deacylated tRNA move to the P and E sites, respectively. Catalyzes the coordinated movement of the two tRNA molecules, the mRNA and conformational changes in the ribosome. This is Elongation factor G from Shigella flexneri.